Consider the following 142-residue polypeptide: MNFKYIVAVSFLITSGYAESVKNDEQSLSQRDVLEEESLREIRGIGGALLSVGKSALKGLAKGFAEHFGKRSAEDHEVMKRLEAVIRDLDSLDHPEEASERETRGFNQEEIANLFTKKEKRILGPVLGLVGSALGGLIKKIG.

A signal peptide spans 1-18 (MNFKYIVAVSFLITSGYA). Positions 19–43 (ESVKNDEQSLSQRDVLEEESLREIR) are excised as a propeptide. Position 68 is a phenylalanine amide (Phe68). The propeptide occupies 72 to 121 (SAEDHEVMKRLEAVIRDLDSLDHPEEASERETRGFNQEEIANLFTKKEKR). Ile141 is modified (isoleucine amide).

It belongs to the bombinin family. In terms of tissue distribution, expressed by the skin glands.

Its subcellular location is the secreted. Maximin-y shows antimicrobial activity against bacteria and against the fungus C.albicans. It has little hemolytic activity. Functionally, maximin-H11 shows antimicrobial activity against bacteria and against the fungus C.albicans. Shows strong hemolytic activity. This Bombina maxima (Giant fire-bellied toad) protein is Maximins y/H11.